A 144-amino-acid chain; its full sequence is MFSTILIVCTGNICRSPIGERYLQQLLPSKNISSAGTQALVDHEADQSAVEVARKNGISLAGHLGRQFTSKLSKEYELILVMEKNHIEQISNIAPEARGKTMLFGHWLEQRDIPDPYRKSEEAFASVFKLIEQSALLWAEKLKA.

The active-site Nucleophile is Cys-9. The active site involves Arg-15. Asp-115 (proton donor) is an active-site residue.

It belongs to the low molecular weight phosphotyrosine protein phosphatase family.

The catalysed reaction is O-phospho-L-tyrosyl-[protein] + H2O = L-tyrosyl-[protein] + phosphate. This Klebsiella pneumoniae protein is Putative low molecular weight protein-tyrosine-phosphatase.